Consider the following 209-residue polypeptide: Glycerol-3-phosphate acyltransferase (209 aa).

A run of 5 helical transmembrane segments spans residues 8–28 (NVLFYITAYLVGGIPFGYILA), 78–98 (VLVLIAKLLGFPPATWWLIGI), 124–144 (VLLVLLPVETIIGIVTWLIVA), 149–169 (ISSLSSLSGLVALVVASFIVH), and 170–190 (PDMPYVHSHAPLLLLAFIIFY).

This sequence belongs to the PlsY family. As to quaternary structure, probably interacts with PlsX.

It is found in the cell inner membrane. It carries out the reaction an acyl phosphate + sn-glycerol 3-phosphate = a 1-acyl-sn-glycero-3-phosphate + phosphate. Its pathway is lipid metabolism; phospholipid metabolism. Catalyzes the transfer of an acyl group from acyl-phosphate (acyl-PO(4)) to glycerol-3-phosphate (G3P) to form lysophosphatidic acid (LPA). This enzyme utilizes acyl-phosphate as fatty acyl donor, but not acyl-CoA or acyl-ACP. In Nitratiruptor sp. (strain SB155-2), this protein is Glycerol-3-phosphate acyltransferase.